A 511-amino-acid polypeptide reads, in one-letter code: Probable lipid II flippase MurJ (511 aa).

A run of 13 helical transmembrane segments spans residues 31–51, 90–110, 130–150, 159–179, 182–202, 237–257, 271–291, 314–334, 354–374, 383–403, 407–427, 443–463, and 481–501; these read IFGAGMATDAFFVAFKLPNLL, LLTLALAVVTVAGMLAAPWVI, LLKITFPYILLISLASLVGAI, IPAFAPTLLNISMIGFALFAA, FNPPVLALAWAVTVGGVLQLV, ILGVSVSQISLIINTIFASFL, LMEFPSGVLGVALGTILLPSL, CFLLALPSAVALGILSGPLTV, LIAYSVGLIGLIVVKVLAPGF, PVKIAIVTLILTQLMNLAFIG, HAGLSLSIGLAACLNASLLYW, AFLLRLVVAVLVMSGVLLGML, and LMAVVLAGIAAYFAALAVLGF.

Belongs to the MurJ/MviN family.

The protein localises to the cell inner membrane. It functions in the pathway cell wall biogenesis; peptidoglycan biosynthesis. Functionally, involved in peptidoglycan biosynthesis. Transports lipid-linked peptidoglycan precursors from the inner to the outer leaflet of the cytoplasmic membrane. In Escherichia coli O157:H7, this protein is Probable lipid II flippase MurJ.